An 816-amino-acid polypeptide reads, in one-letter code: H(+)/Cl(-) exchange transporter 5 (816 aa).

At 1–124 (MAMWQGAMDN…WALIHSVSDA (124 aa)) the chain is on the cytoplasmic side. 2 helical membrane-spanning segments follow: residues 125–162 (FSGWLLMLLIGLFSGSLAGLIDISAHWMTDLKEGICTG) and 208–231 (VNYFMYVLWALLFAFLAVSLVKVF). The short motif at 237 to 241 (GSGIP) is the Selectivity filter part_1 element. S238 lines the chloride pocket. The helical intramembrane region spans 240 to 247 (IPEIKTIL). 2 consecutive transmembrane segments (helical) span residues 256-275 (LGKWTLVIKTITLVLAVSSG) and 281-300 (EGPLVHVACCCGNILCHRFN). Residues 279–283 (GKEGP) carry the Selectivity filter part_2 motif. Intramembrane regions (helical) lie at residues 312-324 (VLSAAAAAGVSVA) and 328-336 (PIGGVLFSL). The next 5 helical transmembrane spans lie at 348–366 (LWRSFFAALVAAFTLRSIN), 389–414 (LVPFILLGIFGGLWGALFIRTNIAWC), 422–442 (LGKYPVIEVLIVTAITAILAF), 498–518 (MWQLALALILKIVITIFTFGM), and 523–542 (GLFIPSMAVGAIAGRLLGVG). The Selectivity filter part_3 motif lies at 523-527 (GLFIP). F525 is a chloride binding site. The segment at residues 570 to 584 (GLYAMVGAAACLGGV) is an intramembrane region (helical). Positions 585–587 (TRM) form an intramembrane region, note=Loop between two helices. An intramembrane region (helical) is located at residues 588-599 (TVSLVVIMFELT). The note=Loop between two helices intramembrane region spans 600–604 (GGLEY). A helical membrane pass occupies residues 605–622 (IVPLMAAAMTSKWVADAL). The Cytoplasmic portion of the chain corresponds to 623–816 (GREGIYDAHI…NQDPDSILFN (194 aa)). Y628 is a chloride binding site. CBS domains are found at residues 656 to 720 (MKPR…ARKK) and 752 to 812 (ILDL…DPDS). ATP contacts are provided by residues T666, 687–689 (YSG), and 794–797 (TKKD).

This sequence belongs to the chloride channel (TC 2.A.49) family. ClC-5/CLCN5 subfamily. As to quaternary structure, interacts with NEDD4 and NEDD4L. Ubiquitinated by NEDD4L in the presence of albumin; which promotes endocytosis and proteasomal degradation.

The protein resides in the golgi apparatus membrane. It is found in the endosome membrane. Its subcellular location is the cell membrane. It carries out the reaction 2 chloride(in) + H(+)(out) = 2 chloride(out) + H(+)(in). Proton-coupled chloride transporter. Functions as antiport system and exchanges chloride ions against protons. Important for normal acidification of the endosome lumen. May play an important role in renal tubular function. The CLC channel family contains both chloride channels and proton-coupled anion transporters that exchange chloride or another anion for protons. The absence of conserved gating glutamate residues is typical for family members that function as channels. This is H(+)/Cl(-) exchange transporter 5 (CLCN5) from Oryctolagus cuniculus (Rabbit).